Consider the following 307-residue polypeptide: MELLFLGTGAGVPAKERNVSSVALQLLGERGATWLFDCGEATQHQILHTAIRPRRIEHIFITHLHGDHLFGLPGLLGSRSFQSGETPLTVFGPKGIRSFVETALAVSGTKLRYELNIVEIDEGVIFDDERFSVIAKRLDHGMPSYGFRVVEKDLPGPLLVERLQALGVRPGPIYQEIKQGKTVVLDDGTVIDGREFVGPPQKGRIVAVLGDTRFCEAAIELARDADVVVHEATFAAAEQRLAHDYFHSTTTDAAEVARRAGAKRLILTHISSRYQGEAALQLVAEARSVFPNTELAVDFASFSIPRG.

His63, His65, Asp67, His68, His140, Asp211, and His269 together coordinate Zn(2+). Asp67 acts as the Proton acceptor in catalysis.

The protein belongs to the RNase Z family. In terms of assembly, homodimer. Zn(2+) is required as a cofactor.

It catalyses the reaction Endonucleolytic cleavage of RNA, removing extra 3' nucleotides from tRNA precursor, generating 3' termini of tRNAs. A 3'-hydroxy group is left at the tRNA terminus and a 5'-phosphoryl group is left at the trailer molecule.. Zinc phosphodiesterase, which displays some tRNA 3'-processing endonuclease activity. Probably involved in tRNA maturation, by removing a 3'-trailer from precursor tRNA. This Geobacillus kaustophilus (strain HTA426) protein is Ribonuclease Z.